Here is a 306-residue protein sequence, read N- to C-terminus: tRNA dimethylallyltransferase (306 aa).

11–18 (APTAAGKT) contacts ATP. Residue 13-18 (TAAGKT) participates in substrate binding.

This sequence belongs to the IPP transferase family. In terms of assembly, monomer. Mg(2+) serves as cofactor.

The catalysed reaction is adenosine(37) in tRNA + dimethylallyl diphosphate = N(6)-dimethylallyladenosine(37) in tRNA + diphosphate. Its function is as follows. Catalyzes the transfer of a dimethylallyl group onto the adenine at position 37 in tRNAs that read codons beginning with uridine, leading to the formation of N6-(dimethylallyl)adenosine (i(6)A). The sequence is that of tRNA dimethylallyltransferase from Deinococcus radiodurans (strain ATCC 13939 / DSM 20539 / JCM 16871 / CCUG 27074 / LMG 4051 / NBRC 15346 / NCIMB 9279 / VKM B-1422 / R1).